The primary structure comprises 154 residues: Ascorbate-specific PTS system EIIA component (154 aa).

Residues 6–150 (SLAENNSIRL…QEVLDLIDRT (145 aa)) form the PTS EIIA type-2 domain. H68 acts as the Tele-phosphohistidine intermediate in catalysis. Position 68 is a phosphohistidine (H68).

The protein resides in the cytoplasm. Functionally, the phosphoenolpyruvate-dependent sugar phosphotransferase system (sugar PTS), a major carbohydrate active transport system, catalyzes the phosphorylation of incoming sugar substrates concomitantly with their translocation across the cell membrane. The enzyme II UlaABC PTS system is involved in ascorbate transport. The protein is Ascorbate-specific PTS system EIIA component (ulaC) of Salmonella choleraesuis (strain SC-B67).